The primary structure comprises 70 residues: Large ribosomal subunit protein eL38 (70 aa).

It belongs to the eukaryotic ribosomal protein eL38 family.

The polypeptide is Large ribosomal subunit protein eL38 (RpL38) (Timarcha balearica).